Reading from the N-terminus, the 300-residue chain is Protease HtpX homolog (300 aa).

The next 2 membrane-spanning stretches (helical) occupy residues 7–24 (GILM…GALI) and 29–46 (GAII…FTFW). Position 130 (histidine 130) interacts with Zn(2+). Residue glutamate 131 is part of the active site. Residue histidine 134 coordinates Zn(2+). 2 consecutive transmembrane segments (helical) span residues 145–165 (VTAT…FFGG) and 174–194 (PMGL…AGLV). Glutamate 203 contacts Zn(2+).

Belongs to the peptidase M48B family. Requires Zn(2+) as cofactor.

Its subcellular location is the cell inner membrane. The sequence is that of Protease HtpX homolog from Cereibacter sphaeroides (strain ATCC 17029 / ATH 2.4.9) (Rhodobacter sphaeroides).